Here is a 341-residue protein sequence, read N- to C-terminus: Phosphoribosylformylglycinamidine cyclo-ligase (341 aa).

It belongs to the AIR synthase family.

The protein resides in the cytoplasm. It catalyses the reaction 2-formamido-N(1)-(5-O-phospho-beta-D-ribosyl)acetamidine + ATP = 5-amino-1-(5-phospho-beta-D-ribosyl)imidazole + ADP + phosphate + H(+). It participates in purine metabolism; IMP biosynthesis via de novo pathway; 5-amino-1-(5-phospho-D-ribosyl)imidazole from N(2)-formyl-N(1)-(5-phospho-D-ribosyl)glycinamide: step 2/2. This chain is Phosphoribosylformylglycinamidine cyclo-ligase, found in Xanthomonas campestris pv. campestris (strain B100).